A 160-amino-acid chain; its full sequence is MITKRKKKSYTSVYALGQYISMSAHKARRVIDQIRGRSYEEALMILELMPYRGCYPIFKLVYSAAANASHNKGFKETNLVISKAEVNQGNTVKKLKPRARGRSYPIKRSTCHITIVLEDISFYQQYEEYLMYLKKPGCSNENRNLTCYDTYSSGGLWDKK.

It belongs to the universal ribosomal protein uL22 family. As to quaternary structure, part of the 50S ribosomal subunit.

It localises to the plastid. The protein resides in the chloroplast. In terms of biological role, this protein binds specifically to 23S rRNA. The globular domain of the protein is located near the polypeptide exit tunnel on the outside of the subunit, while an extended beta-hairpin is found that lines the wall of the exit tunnel in the center of the 70S ribosome. This chain is Large ribosomal subunit protein uL22c (rpl22), found in Crucihimalaya wallichii (Rock-cress).